A 174-amino-acid chain; its full sequence is Photosystem II repair protein PSB27-H1, chloroplastic (174 aa).

A disordered region spans residues methionine 1 to arginine 35. At threonine 94 the chain carries Phosphothreonine. Tyrosine 132 carries the phosphotyrosine modification.

It belongs to the Psb27 family.

It localises to the plastid. Its subcellular location is the chloroplast thylakoid membrane. Its function is as follows. Probably involved in repair of photodamaged photosystem II (PSII). This Arabidopsis thaliana (Mouse-ear cress) protein is Photosystem II repair protein PSB27-H1, chloroplastic (PSB27-1).